Here is a 479-residue protein sequence, read N- to C-terminus: Preferentially expressed antigen in melanoma-like protein 7 (479 aa).

One copy of the LRR 1; degenerate repeat lies at 96 to 124 (MGRLKKVDFRDAQHHASLDMQDEREGRDY). The stretch at 179 to 203 (HLCCEKLEIGAVEVSKVRNVLKFLQ) is one LRR 2; degenerate repeat. The LRR 3; degenerate repeat unit spans residues 204-230 (PELIKELKLNTVGNLSKLAKFVPFIRK). The stretch at 231–265 (MRNLQKLMLVRTFGTRTFTQEEKQNISKIISLFCK) is one LRR 4; degenerate repeat. LRR repeat units follow at residues 266 to 291 (LSCL…LRCL), 292 to 323 (EAPL…SQLK), 324 to 347 (HLCL…LKRV), 348 to 375 (AANL…ALIK), and 376 to 400 (CTQL…FLHR).

It belongs to the PRAME family. In terms of assembly, interacts with UHRF1. Seems to be specific to pluripotent tissues in the early embryo. Not detected in somatic tissues.

Its function is as follows. Promotes maintenance and self-renewal of pluripotent embryonic stem cells (ESCs), downstream of LIF/STAT3. Maintains the pluripotency state of ESCs by repressing DNA methylation through the regulation of UHRF1 stability. Mediates the proteasomal degradation of UHRF1. Is required for the establishment of the blastocyst. In Mus musculus (Mouse), this protein is Preferentially expressed antigen in melanoma-like protein 7.